We begin with the raw amino-acid sequence, 416 residues long: Enolase (416 aa).

Residue glutamine 156 participates in (2R)-2-phosphoglycerate binding. Glutamate 200 functions as the Proton donor in the catalytic mechanism. Aspartate 236, glutamate 281, and aspartate 308 together coordinate Mg(2+). Positions 333, 362, 363, and 384 each coordinate (2R)-2-phosphoglycerate. Lysine 333 acts as the Proton acceptor in catalysis.

The protein belongs to the enolase family. Requires Mg(2+) as cofactor.

Its subcellular location is the cytoplasm. The protein resides in the secreted. It localises to the cell surface. The catalysed reaction is (2R)-2-phosphoglycerate = phosphoenolpyruvate + H2O. It participates in carbohydrate degradation; glycolysis; pyruvate from D-glyceraldehyde 3-phosphate: step 4/5. Its function is as follows. Catalyzes the reversible conversion of 2-phosphoglycerate (2-PG) into phosphoenolpyruvate (PEP). It is essential for the degradation of carbohydrates via glycolysis. This is Enolase from Methanothermobacter thermautotrophicus (strain ATCC 29096 / DSM 1053 / JCM 10044 / NBRC 100330 / Delta H) (Methanobacterium thermoautotrophicum).